Here is a 159-residue protein sequence, read N- to C-terminus: Membrane protein FAM174B (159 aa).

The signal sequence occupies residues 1–27 (MRAALPPARLLPLLLLLALLGAPAARA). The tract at residues 28-73 (SRAQSAAPPQPGAERQPRPPPGPGPGNATGTGSGEAAGGGGSSNSS) is disordered. Residues 28-90 (SRAQSAAPPQ…ISSLLRDLHT (63 aa)) are Extracellular-facing. Gly residues predominate over residues 52 to 69 (PGNATGTGSGEAAGGGGS). Asparagine 54 carries an N-linked (GlcNAc...) asparagine glycan. Residues 91 to 111 (LKAAVIVACAFTAFLIACLLL) form a helical membrane-spanning segment. The Cytoplasmic portion of the chain corresponds to 112–159 (RVFRSGKRLKKTRKYDIITTPAERVEMAPLNEEDDEDEDSTVFDIKYR).

This sequence belongs to the FAM174 family.

It is found in the cell membrane. It localises to the golgi apparatus. Essential for Golgi structural integrity. The protein is Membrane protein FAM174B (FAM174B) of Bos taurus (Bovine).